A 1052-amino-acid chain; its full sequence is Membrane-bound transcription factor site-1 protease (1052 aa).

A signal peptide spans 1–17; that stretch reads MKLVNIWLLLLVVLLCG. Positions 18–186 are excised as a propeptide; it reads KKHLGDRLGK…TGRHSSRRLL (169 aa). Residue Asn148 is glycosylated (N-linked (GlcNAc...) asparagine). The residue at position 168 (Ser168) is a Phosphoserine. Residues 187–999 are Lumenal-facing; the sequence is RAIPRQVAQT…MPGRYNQEVG (813 aa). In terms of domain architecture, Peptidase S8 spans 190-472; it reads PRQVAQTLQA…HGKLDLLRAY (283 aa). Residue Asp218 is the Charge relay system of the active site. N-linked (GlcNAc...) asparagine glycosylation is present at Asn236. His249 serves as the catalytic Charge relay system. N-linked (GlcNAc...) asparagine glycosylation is present at Asn305. Ser414 serves as the catalytic Charge relay system. Asn515 and Asn728 each carry an N-linked (GlcNAc...) asparagine glycan. Residues 877 to 887 show a composition bias toward polar residues; that stretch reads PSLSHSGNRQR. Residues 877–900 form a disordered region; the sequence is PSLSHSGNRQRPPSGAGLAPPERM. Residue Asn939 is glycosylated (N-linked (GlcNAc...) asparagine). A helical transmembrane segment spans residues 1000–1022; the sequence is QTIPVFAFLGAMVALAFFVVQIS. The Cytoplasmic segment spans residues 1023 to 1052; it reads KAKSRPKRRRPRAKRPQLAQQAHPARTPSV. Positions 1026–1037 are enriched in basic residues; it reads SRPKRRRPRAKR. The tract at residues 1026-1052 is disordered; that stretch reads SRPKRRRPRAKRPQLAQQAHPARTPSV.

This sequence belongs to the peptidase S8 family. In terms of assembly, interacts with LYSET; this interaction bridges GNPTAB to MBTPS1. Ca(2+) is required as a cofactor. Post-translationally, the 148 kDa zymogen is processed progressively into two membrane-bound 120 and 106 kDa forms in the endoplasmic reticulum, and late into a secreted 98 kDa form. The propeptide is autocatalytically removed through an intramolecular cleavage after Leu-186. Further cleavage generates 14, 10, and 8 kDa intermediates. In terms of tissue distribution, widely expressed. In adult rat, highly expressed in anterior pituitary, thyroid and adrenal glands and in liver. In 2-day old rat, detected in developing skin, striated muscles, cardiac muscles, bones, teeth and internal organs. Highly expressed in retina, cerebellum, pituitary, submaxillary, thyroid and adrenal glands, molars, thymus, kidney and intestine.

It localises to the endoplasmic reticulum membrane. The protein localises to the golgi apparatus membrane. It carries out the reaction Processes precursors containing basic and hydrophobic/aliphatic residues at P4 and P2, respectively, with a relatively relaxed acceptance of amino acids at P1 and P3.. With respect to regulation, inhibited by divalent copper and zinc ions, but not by nickel or cobalt. Inhibited by its prosegment, but not smaller fragments. Inhibited by 4-(2-aminoethyl)benzenesulfonyl fluoride (AEBSF), a serine protease inhibitor. Functionally, serine protease that cleaves after hydrophobic or small residues, provided that Arg or Lys is in position P4: known substrates include SREBF1/SREBP1, SREBF2/SREBP2, BDNF, GNPTAB, ATF6, ATF6B and FAM20C. Cleaves substrates after Arg-Ser-Val-Leu (SREBP2), Arg-His-Leu-Leu (ATF6), Arg-Gly-Leu-Thr (BDNF) and its own propeptide after Arg-Arg-Leu-Leu. Catalyzes the first step in the proteolytic activation of the sterol regulatory element-binding proteins (SREBPs) SREBF1/SREBP1 and SREBF2/SREBP2. Also mediates the first step in the proteolytic activation of the cyclic AMP-dependent transcription factor ATF-6 (ATF6 and ATF6B). Mediates the protein cleavage of GNPTAB into subunit alpha and beta, thereby participating in biogenesis of lysosomes. Cleaves the propeptide from FAM20C which is required for FAM20C secretion from the Golgi apparatus membrane and for enhancement of FAM20C kinase activity, promoting osteoblast differentiation and biomineralization. Involved in the regulation of M6P-dependent Golgi-to-lysosome trafficking of lysosomal enzymes. It is required for the activation of CREB3L2/BBF2H7, a transcriptional activator of MIA3/TANGO and other genes controlling mega vesicle formation. Therefore, it plays a key role in the regulation of mega vesicle-mediated collagen trafficking. In astrocytes and osteoblasts, upon DNA damage and ER stress, mediates the first step of the regulated intramembrane proteolytic activation of the transcription factor CREB3L1, leading to the inhibition of cell-cycle progression. This is Membrane-bound transcription factor site-1 protease (Mbtps1) from Rattus norvegicus (Rat).